A 628-amino-acid polypeptide reads, in one-letter code: MLPDNLKDLYVQWLQELIDSLSEKQEQLINTYSKAKKNLIDHDGVFYYPKDLLKVKGIGATIAKRLEARLVKHCEEIGVDVPRKQLPIDNGTQGSKSLKRVRTQLRIDGINTNDTDINKPVRKKRKYIPKKRSGAYAILLALLELGAQNKGVIKPDIIEAAQKYTDHSMTPNYTTKEFYSAWSSIAQLKKHELVLIEGRPQQYTLTEEGLQLADTLRLADGIDIDGKSIASSMDTNNAYYSDEHTADFSALKHDLSGLTCAPIKDGTNSSGNYSILEKTFGSQDFNVRHHEIGMVQRSHTFGNGDSNNSIEPLPRDTSEFTTQPSLIQRRRFESVSYELWQPGTYEIYPVIDHREVRSHSDREFFFNAFKARDMKSEIRQLSLGDIIWVAKNKTTGQQCILNTIIERKRLDDLAMSIRDNRFMEQKNRLEKSGCKHKYYLIEETIGSSIGNMADALKTTLWIILVYYRFSMIRTVNAEDSVDKLHALHTVICESYKHKALVVLYPTDLKSQDHYRGILSIFQNEFERSGNLECCHTFDTFQDIMGKRELKTIKEITIHILMLVRGVSLEKAVFIQRHFPTLNHLLNAYRKCNSQMEAKLMMFQKFGNAPGAKKITKQLSEKLAETFAF.

The segment covering S298 to I310 has biased composition (polar residues). The segment at S298–S318 is disordered. Positions Y348–I445 constitute an ERCC4 domain.

It belongs to the XPF family. Interacts with EME1. Mg(2+) is required as a cofactor.

It is found in the nucleus. Its function is as follows. Interacts with EME1 to form a DNA structure-specific endonuclease with substrate preference for branched DNA structures with a 5'-end at the branch nick. Typical substrates include 3'-flap structures, D-loops, replication forks and nicked Holliday junctions. May be required in mitosis for the processing of stalled or collapsed replication fork intermediates. May be required in meiosis for the repair of meiosis-specific double strand breaks subsequent to single-end invasion (SEI). This Candida glabrata (strain ATCC 2001 / BCRC 20586 / JCM 3761 / NBRC 0622 / NRRL Y-65 / CBS 138) (Yeast) protein is Crossover junction endonuclease MUS81 (MUS81).